We begin with the raw amino-acid sequence, 307 residues long: Nicotinamide/nicotinic acid mononucleotide adenylyltransferase 2 (307 aa).

Residues S16 and F17 each contribute to the NAD(+) site. H24 serves as a coordination point for ATP. Positions 92 and 95 each coordinate NAD(+). S-palmitoyl cysteine attachment occurs at residues C164 and C165. NAD(+)-binding residues include G200, D202, L212, W213, and R232. Residue 271–274 (TKSR) participates in ATP binding.

Belongs to the eukaryotic NMN adenylyltransferase family. In terms of assembly, monomer. The cofactor is Mg(2+). In terms of processing, degraded in response to injured neurite. Degradation is caused by polyubiquitination by MYCBP2 after recognition by FBXO45. Post-translationally, palmitoylated; palmitoylation is required for membrane association.

It is found in the golgi apparatus membrane. The protein localises to the cytoplasmic vesicle membrane. Its subcellular location is the cytoplasm. The protein resides in the cell projection. It localises to the axon. It carries out the reaction beta-nicotinamide D-ribonucleotide + ATP + H(+) = diphosphate + NAD(+). The enzyme catalyses nicotinate beta-D-ribonucleotide + ATP + H(+) = deamido-NAD(+) + diphosphate. It participates in cofactor biosynthesis; NAD(+) biosynthesis; NAD(+) from nicotinamide D-ribonucleotide: step 1/1. The protein operates within cofactor biosynthesis; NAD(+) biosynthesis; deamido-NAD(+) from nicotinate D-ribonucleotide: step 1/1. Inhibited by P1-(adenosine-5')-P3-(nicotinamide-riboside-5')-triphosphate (Np3AD) and P1-(adenosine-5')-P4-(nicotinamide-riboside-5')-tetraphosphate (Np4AD). In terms of biological role, nicotinamide/nicotinate-nucleotide adenylyltransferase that acts as an axon maintenance factor. Axon survival factor required for the maintenance of healthy axons: acts by delaying Wallerian axon degeneration, an evolutionarily conserved process that drives the loss of damaged axons. Catalyzes the formation of NAD(+) from nicotinamide mononucleotide (NMN) and ATP. Can also use the deamidated form; nicotinic acid mononucleotide (NaMN) as substrate but with a lower efficiency. Cannot use triazofurin monophosphate (TrMP) as substrate. Also catalyzes the reverse reaction, i.e. the pyrophosphorolytic cleavage of NAD(+). For the pyrophosphorolytic activity prefers NAD(+), NADH and NaAD as substrates and degrades nicotinic acid adenine dinucleotide phosphate (NHD) less effectively. Fails to cleave phosphorylated dinucleotides NADP(+), NADPH and NaADP(+). Also acts as an activator of ADP-ribosylation by supporting the catalytic activity of PARP16 and promoting mono-ADP-ribosylation of ribosomes by PARP16. May be involved in the maintenance of axonal integrity. The chain is Nicotinamide/nicotinic acid mononucleotide adenylyltransferase 2 (NMNAT2) from Bos taurus (Bovine).